We begin with the raw amino-acid sequence, 287 residues long: Phosphatidylglycerol--prolipoprotein diacylglyceryl transferase (287 aa).

The next 4 helical transmembrane spans lie at 26 to 46, 71 to 91, 106 to 126, and 132 to 152; these read VAIR…WWLA, FLVW…ILFY, IWRG…AMIV, and GLPV…GLFF. Residue Arg154 participates in a 1,2-diacyl-sn-glycero-3-phospho-(1'-sn-glycerol) binding. 3 helical membrane passes run 187 to 207, 217 to 237, and 251 to 271; these read SQLY…QVLA, GVIS…VEFF, and WLTM…WAIW.

This sequence belongs to the Lgt family.

The protein resides in the cell inner membrane. The enzyme catalyses L-cysteinyl-[prolipoprotein] + a 1,2-diacyl-sn-glycero-3-phospho-(1'-sn-glycerol) = an S-1,2-diacyl-sn-glyceryl-L-cysteinyl-[prolipoprotein] + sn-glycerol 1-phosphate + H(+). The protein operates within protein modification; lipoprotein biosynthesis (diacylglyceryl transfer). In terms of biological role, catalyzes the transfer of the diacylglyceryl group from phosphatidylglycerol to the sulfhydryl group of the N-terminal cysteine of a prolipoprotein, the first step in the formation of mature lipoproteins. The chain is Phosphatidylglycerol--prolipoprotein diacylglyceryl transferase from Allorhizobium ampelinum (strain ATCC BAA-846 / DSM 112012 / S4) (Agrobacterium vitis (strain S4)).